Consider the following 308-residue polypeptide: MGEDRRSLRVDYDDNFLRNNICSLKVSFIKQQGGAEGVKRLYADLGLALVALIWGSTFPVVKIALDSMSPFAFNTVRFFIACLFFLPFLKGWDFKDGFKIGIASFLGYTFQTVGLDYTTATNAGFITSTYVVLAPIISWLVYKDVFDKRDVSGVLLAFVGFYFLSGYSGFNIGDILMLFCALFFGAEIAMISHYSRLSNPTMLAFWQSFAIFILSAPFAVFTTTKFEINTTVILCLLITAFFATFVAKMLQNWLQSYTKSSDAAVILSLEGVFAHLFSVAVLAEILTPVQYFGAFLILLAVIIVSLRV.

The next 10 membrane-spanning stretches (helical) occupy residues 45–65 (LGLA…KIAL), 69–89 (SPFA…LPFL), 100–120 (IGIA…YTTA), 122–142 (NAGF…WLVY), 151–171 (VSGV…SGFN), 172–192 (IGDI…AMIS), 201–221 (TMLA…FAVF), 226–246 (FEIN…ATFV), 263–283 (AAVI…AVLA), and 285–305 (ILTP…IIVS). EamA domains lie at 52 to 166 (LIWG…FLSG) and 178 to 306 (LFCA…IVSL).

It belongs to the EamA transporter family.

Its subcellular location is the cell membrane. This is an uncharacterized protein from Archaeoglobus fulgidus (strain ATCC 49558 / DSM 4304 / JCM 9628 / NBRC 100126 / VC-16).